Reading from the N-terminus, the 540-residue chain is Arylsulfatase K (540 aa).

The N-terminal stretch at 1–22 is a signal peptide; sequence MLLLWVSVVAASALAAPAPGAD. Positions 44 and 84 each coordinate Ca(2+). The active-site Nucleophile is Cys84. Cys84 carries the 3-oxoalanine (Cys) modification. N-linked (GlcNAc...) asparagine glycosylation is present at Asn112. Lys132 lines the substrate pocket. A glycan (N-linked (GlcNAc...) asparagine) is linked at Asn197. His255 is a binding site for substrate. Asn266 is a glycosylation site (N-linked (GlcNAc...) asparagine). Ca(2+) contacts are provided by Asp317 and His318. N-linked (GlcNAc...) asparagine glycans are attached at residues Asn379, Asn417, and Asn502.

The protein belongs to the sulfatase family. It depends on Ca(2+) as a cofactor. Post-translationally, the conversion to 3-oxoalanine (also known as C-formylglycine, FGly), of a serine or cysteine residue in prokaryotes and of a cysteine residue in eukaryotes, is critical for catalytic activity. In terms of processing, the 75-kDa precursor undergoes proteolytic processing to yield a 23 kDa form. N-glycosylated with both high mannose and complex type sugars.

It localises to the secreted. The protein localises to the lysosome. It carries out the reaction an aryl sulfate + H2O = a phenol + sulfate + H(+). The enzyme catalyses Hydrolysis of the 2-sulfate groups of the 2-O-sulfo-D-glucuronate residues of chondroitin sulfate, heparin and heparitin sulfate.. Its function is as follows. Catalyzes the hydrolysis of pseudosubstrates such as p-nitrocatechol sulfate and p-nitrophenyl sulfate. Catalyzes the hydrolysis of the 2-sulfate groups of the 2-O-sulfo-D-glucuronate residues of chondroitin sulfate, heparin and heparitin sulfate. Acts selectively on 2-sulfoglucuronate and lacks activity against 2-sulfoiduronate. This chain is Arylsulfatase K (ARSK), found in Bos taurus (Bovine).